Here is a 235-residue protein sequence, read N- to C-terminus: 5'-methylthioadenosine/S-adenosylhomocysteine nucleosidase (235 aa).

The active-site Proton acceptor is the glutamate 12. Substrate contacts are provided by residues glycine 78, methionine 153, and 174-175; that span reads ME. Residue aspartate 198 is the Proton donor of the active site.

Belongs to the PNP/UDP phosphorylase family. MtnN subfamily.

The catalysed reaction is S-adenosyl-L-homocysteine + H2O = S-(5-deoxy-D-ribos-5-yl)-L-homocysteine + adenine. The enzyme catalyses S-methyl-5'-thioadenosine + H2O = 5-(methylsulfanyl)-D-ribose + adenine. It catalyses the reaction 5'-deoxyadenosine + H2O = 5-deoxy-D-ribose + adenine. Its pathway is amino-acid biosynthesis; L-methionine biosynthesis via salvage pathway; S-methyl-5-thio-alpha-D-ribose 1-phosphate from S-methyl-5'-thioadenosine (hydrolase route): step 1/2. Its function is as follows. Catalyzes the irreversible cleavage of the glycosidic bond in both 5'-methylthioadenosine (MTA) and S-adenosylhomocysteine (SAH/AdoHcy) to adenine and the corresponding thioribose, 5'-methylthioribose and S-ribosylhomocysteine, respectively. Also cleaves 5'-deoxyadenosine, a toxic by-product of radical S-adenosylmethionine (SAM) enzymes, into 5-deoxyribose and adenine. The protein is 5'-methylthioadenosine/S-adenosylhomocysteine nucleosidase of Pseudoalteromonas translucida (strain TAC 125).